A 295-amino-acid chain; its full sequence is 4-hydroxy-tetrahydrodipicolinate synthase (295 aa).

Pyruvate is bound at residue threonine 47. The Proton donor/acceptor role is filled by tyrosine 135. The active-site Schiff-base intermediate with substrate is the lysine 163. Isoleucine 206 contributes to the pyruvate binding site.

It belongs to the DapA family. Homodimer.

Its subcellular location is the cytoplasm. It carries out the reaction L-aspartate 4-semialdehyde + pyruvate = (2S,4S)-4-hydroxy-2,3,4,5-tetrahydrodipicolinate + H2O + H(+). It participates in amino-acid biosynthesis; L-lysine biosynthesis via DAP pathway; (S)-tetrahydrodipicolinate from L-aspartate: step 3/4. Its function is as follows. Catalyzes the condensation of (S)-aspartate-beta-semialdehyde [(S)-ASA] and pyruvate to 4-hydroxy-tetrahydrodipicolinate (HTPA). This is 4-hydroxy-tetrahydrodipicolinate synthase from Staphylococcus aureus (strain MSSA476).